The primary structure comprises 133 residues: MFDGSDLKNLFSLDGFLKTIQFEPEYIREGEISIIVPLRNNLLRIGEIMNGGAVMAISDAIGGLSAMTYPGIVNQVTVSFNTEFMRPIAKGPVRFISRVDRIGKSIAYVEVLVYDGENLLSSKSTGVYFLYRS.

Belongs to the thioesterase PaaI family.

The chain is Putative esterase TV1331 from Thermoplasma volcanium (strain ATCC 51530 / DSM 4299 / JCM 9571 / NBRC 15438 / GSS1).